The chain runs to 218 residues: Capsid protein (218 aa).

An N-acetylmethionine; by host modification is found at M1. Residues 1 to 28 (MDKSESTSAGRNRRRRPRRGSRSAPSSA) are disordered. The span at 11–21 (RNRRRRPRRGS) shows a compositional bias: basic residues.

It belongs to the cucumovirus capsid protein family.

Its subcellular location is the virion. Functionally, capsid protein. Probably binds RNA and plays a role in packaging. The protein is Capsid protein of Cucumis sativus (Cucumber).